The chain runs to 260 residues: Protein-L-isoaspartate O-methyltransferase (260 aa).

The tract at residues 1 to 27 (MKSPVAGAVLDPSTPPPTTGTSWRWPG) is disordered. Ser92 is a catalytic residue.

It belongs to the methyltransferase superfamily. L-isoaspartyl/D-aspartyl protein methyltransferase family.

The protein resides in the cytoplasm. It carries out the reaction [protein]-L-isoaspartate + S-adenosyl-L-methionine = [protein]-L-isoaspartate alpha-methyl ester + S-adenosyl-L-homocysteine. In terms of biological role, catalyzes the methyl esterification of L-isoaspartyl residues in peptides and proteins that result from spontaneous decomposition of normal L-aspartyl and L-asparaginyl residues. It plays a role in the repair and/or degradation of damaged proteins. This chain is Protein-L-isoaspartate O-methyltransferase (pcm), found in Aeropyrum pernix (strain ATCC 700893 / DSM 11879 / JCM 9820 / NBRC 100138 / K1).